We begin with the raw amino-acid sequence, 137 residues long: Cytochrome c2 (137 aa).

A signal peptide spans 1–21 (MKISLTAATVAALVLAAPAFA). Positions 34, 37, 38, and 117 each coordinate heme c.

This sequence belongs to the cytochrome c family. Post-translationally, binds 1 heme c group covalently per subunit.

Functionally, cytochrome c2 is found mainly in purple, non-sulfur, photosynthetic bacteria where it functions as the electron donor to the oxidized bacteriochlorophyll in the photophosphorylation pathway. However, it may also have a role in the respiratory chain and is found in some non-photosynthetic bacteria. The protein is Cytochrome c2 (cycA) of Rhodobacter capsulatus (strain ATCC BAA-309 / NBRC 16581 / SB1003).